The sequence spans 221 residues: MDPYKNLNPKGYQRQRPFSSAGESGGSGGSGTAHETDDNKKKKKLLHRDIERQRRQEMATLFATLRTHLPLKYIKGKRAVSDHVNGAVNFIKDTEARIKELSARRDELSRETGQGYKSNPDPGKTGSDVGKSEPATVMVQPHVSGLEVVVSSNSSGPEALPLSKVLETIQEKGLEVMSSFTTRVNDRLMHTIQVEVNSFGCIDLLWLQQKLVEDLILSTGY.

Disordered regions lie at residues 1 to 46 (MDPY…KKLL) and 104 to 132 (RRDELSRETGQGYKSNPDPGKTGSDVGKS). The bHLH domain occupies 42–94 (KKKLLHRDIERQRRQEMATLFATLRTHLPLKYIKGKRAVSDHVNGAVNFIKDT).

Homodimer.

The protein localises to the nucleus. In Arabidopsis thaliana (Mouse-ear cress), this protein is Transcription factor bHLH126 (BHLH126).